The chain runs to 544 residues: CTP synthase (544 aa).

Positions Met1 to Leu266 are amidoligase domain. Ser14 is a binding site for CTP. A UTP-binding site is contributed by Ser14. Residues Ser15–Ile20 and Asp72 each bind ATP. Residues Asp72 and Glu140 each coordinate Mg(2+). CTP-binding positions include Asp147–Glu149, Lys187–Gln192, and Lys223. Residues Lys187–Gln192 and Lys223 each bind UTP. A Glutamine amidotransferase type-1 domain is found at Thr291–Ile541. Gly352 is an L-glutamine binding site. The active-site Nucleophile; for glutamine hydrolysis is Cys379. Residues Leu380 to Gln383, Glu403, and Arg469 each bind L-glutamine. Residues His514 and Glu516 contribute to the active site.

This sequence belongs to the CTP synthase family. In terms of assembly, homotetramer.

It catalyses the reaction UTP + L-glutamine + ATP + H2O = CTP + L-glutamate + ADP + phosphate + 2 H(+). It carries out the reaction L-glutamine + H2O = L-glutamate + NH4(+). The catalysed reaction is UTP + NH4(+) + ATP = CTP + ADP + phosphate + 2 H(+). Its pathway is pyrimidine metabolism; CTP biosynthesis via de novo pathway; CTP from UDP: step 2/2. Its activity is regulated as follows. Allosterically activated by GTP, when glutamine is the substrate; GTP has no effect on the reaction when ammonia is the substrate. The allosteric effector GTP functions by stabilizing the protein conformation that binds the tetrahedral intermediate(s) formed during glutamine hydrolysis. Inhibited by the product CTP, via allosteric rather than competitive inhibition. Functionally, catalyzes the ATP-dependent amination of UTP to CTP with either L-glutamine or ammonia as the source of nitrogen. Regulates intracellular CTP levels through interactions with the four ribonucleotide triphosphates. This chain is CTP synthase, found in Buchnera aphidicola subsp. Baizongia pistaciae (strain Bp).